The primary structure comprises 539 residues: Squalene monooxygenase SE1 (539 aa).

The next 2 helical transmembrane spans lie at 22–42 (LLIDQYFLGWIFAFLFGFLLL) and 71–91 (IAGSTDVIIVGAGVAGSALAY). FAD is bound by residues 84–85 (VA), 104–105 (ER), R112, R183, V199, D361, and M374. The chain crosses the membrane as a helical span at residues 472 to 492 (LFLHFFAVAIYGVGRLLIPFP).

Belongs to the squalene monooxygenase family. It depends on FAD as a cofactor. In terms of tissue distribution, mostly expressed in flower buds and leaves, and, to a lower extent, at high levels thought, in roots and petioles. In petioles, preferentially observed in vascular bundle tissue (phloem cells and parenchymatous cells near xylem) and resin ducts.

It is found in the microsome membrane. The protein resides in the endoplasmic reticulum membrane. It catalyses the reaction squalene + reduced [NADPH--hemoprotein reductase] + O2 = (S)-2,3-epoxysqualene + oxidized [NADPH--hemoprotein reductase] + H2O + H(+). Its pathway is terpene metabolism; lanosterol biosynthesis; lanosterol from farnesyl diphosphate: step 2/3. In terms of biological role, component of the triterpene saponins (e.g. ginsenosides or panaxosides) and phytosterols biosynthetic pathways. Catalyzes the first oxygenation step in sterol biosynthesis and is suggested to be one of the rate-limiting enzymes in this pathway. The sequence is that of Squalene monooxygenase SE1 from Panax ginseng (Korean ginseng).